Reading from the N-terminus, the 83-residue chain is Mu-theraphotoxin-Hhn2f (83 aa).

Positions 1 to 21 (MKASMFLALAGLVLLFVVGYA) are cleaved as a signal peptide. Positions 22–48 (SESEEKEFPIELLSKIFAVDVFKGEER) are excised as a propeptide. 3 disulfide bridges follow: Cys-50–Cys-65, Cys-57–Cys-70, and Cys-64–Cys-77. Position 81 is a leucine amide (Leu-81).

The protein belongs to the neurotoxin 10 (Hwtx-1) family. 15 (Hntx-3) subfamily. Monomer. Expressed by the venom gland.

It is found in the secreted. Its function is as follows. Lethal neurotoxin. Selectively blocks tetrodotoxin-sensitive voltage-gated sodium channels (Nav). Does not affect tetrodotoxin-resistant voltage-gated sodium channels or calcium channels. The protein is Mu-theraphotoxin-Hhn2f of Cyriopagopus hainanus (Chinese bird spider).